The sequence spans 170 residues: 4-hydroxyphenylacetate 3-monooxygenase reductase component (170 aa).

It belongs to the non-flavoprotein flavin reductase family. HpaC subfamily. As to quaternary structure, homodimer. 4-HPA 3-monooxygenase consists of a reductase component HpaC and an oxygenase component HpaB.

It carries out the reaction a reduced flavin + NAD(+) = an oxidized flavin + NADH + 2 H(+). Its pathway is aromatic compound metabolism; 4-hydroxyphenylacetate degradation; pyruvate and succinate semialdehyde from 4-hydroxyphenylacetate: step 1/7. Catalyzes the reduction of free flavins (FMN, FAD and riboflavin) by NADH. Subsequently, the reduced flavins diffuse to the large HpaB component or to other electron acceptors such as cytochrome c and Fe(3+) ion. This Escherichia coli protein is 4-hydroxyphenylacetate 3-monooxygenase reductase component (hpaC).